The following is a 567-amino-acid chain: Probable serine/threonine-protein kinase WNK6 (567 aa).

The 258-residue stretch at 28–285 folds into the Protein kinase domain; that stretch reads IRYKEVIGKG…AKELLLDPFL (258 aa). ATP is bound by residues 108–111 and Lys-158; that span reads TELF. The active-site Proton acceptor is the Asp-175. The segment covering 499-509 has biased composition (basic and acidic residues); it reads VDATKGEDKSS. A disordered region spans residues 499–528; sequence VDATKGEDKSSIQEVEEATEPVSLEEEERL. Positions 512 to 525 are enriched in acidic residues; the sequence is EVEEATEPVSLEEE. A coiled-coil region spans residues 519–553; that stretch reads PVSLEEEERLRQELEEIEAKYQEDMKEIATKREEA.

It belongs to the protein kinase superfamily. Ser/Thr protein kinase family. WNK subfamily.

It catalyses the reaction L-seryl-[protein] + ATP = O-phospho-L-seryl-[protein] + ADP + H(+). The catalysed reaction is L-threonyl-[protein] + ATP = O-phospho-L-threonyl-[protein] + ADP + H(+). Functionally, may regulate flowering time by modulating the photoperiod pathway. This chain is Probable serine/threonine-protein kinase WNK6 (WNK6), found in Arabidopsis thaliana (Mouse-ear cress).